The primary structure comprises 174 residues: Shikimate kinase 2 (174 aa).

Residue 12–17 (GAGKTT) participates in ATP binding. Mg(2+)-binding residues include Thr16 and Asp32. Residues Asp34, Arg58, and Gly79 each contribute to the substrate site. Residues 112–126 (AEDPEEAQRPSLTGK) are LID domain. Arg120 lines the ATP pocket. Arg139 contributes to the substrate binding site. Gln155 serves as a coordination point for ATP.

Belongs to the shikimate kinase family. AroL subfamily. In terms of assembly, monomer. It depends on Mg(2+) as a cofactor.

It localises to the cytoplasm. The enzyme catalyses shikimate + ATP = 3-phosphoshikimate + ADP + H(+). It functions in the pathway metabolic intermediate biosynthesis; chorismate biosynthesis; chorismate from D-erythrose 4-phosphate and phosphoenolpyruvate: step 5/7. In terms of biological role, catalyzes the specific phosphorylation of the 3-hydroxyl group of shikimic acid using ATP as a cosubstrate. This chain is Shikimate kinase 2, found in Yersinia pseudotuberculosis serotype IB (strain PB1/+).